Consider the following 238-residue polypeptide: Uridylate kinase (238 aa).

Residue 12 to 15 (KLSG) coordinates ATP. A UMP-binding site is contributed by G54. Residues G55 and R59 each coordinate ATP. UMP is bound by residues D74 and 135–142 (TGNPFFTT). 4 residues coordinate ATP: T162, N163, Y168, and D171.

Belongs to the UMP kinase family. As to quaternary structure, homohexamer.

Its subcellular location is the cytoplasm. The catalysed reaction is UMP + ATP = UDP + ADP. It functions in the pathway pyrimidine metabolism; CTP biosynthesis via de novo pathway; UDP from UMP (UMPK route): step 1/1. With respect to regulation, inhibited by UTP. Catalyzes the reversible phosphorylation of UMP to UDP. This Rhodopseudomonas palustris (strain HaA2) protein is Uridylate kinase.